Reading from the N-terminus, the 282-residue chain is Putative hydrolase BamMC406_5393 (282 aa).

Positions 124, 126, and 155 each coordinate Mg(2+).

The protein belongs to the FAH family. Requires Mg(2+) as cofactor.

The protein is Putative hydrolase BamMC406_5393 of Burkholderia ambifaria (strain MC40-6).